A 567-amino-acid polypeptide reads, in one-letter code: tRNA(His) guanylyltransferase 1 (567 aa).

Mg(2+) is bound by residues Asp-342, Gly-343, and Asp-389. GTP-binding positions include 342 to 347 (DGCHFH) and 388 to 389 (SD). Residues Lys-397 and Lys-403 each participate in a glycyl lysine isopeptide (Lys-Gly) (interchain with G-Cter in ubiquitin) cross-link.

Belongs to the tRNA(His) guanylyltransferase family. Mg(2+) is required as a cofactor.

Its subcellular location is the nucleus. The protein resides in the nucleoplasm. The enzyme catalyses a 5'-end ribonucleotide-tRNA(His) + GTP + ATP + H2O = a 5'-end phospho-guanosine-ribonucleotide-tRNA(His) + AMP + 2 diphosphate + H(+). In terms of biological role, adds a GMP to the 5'-end of tRNA(His) after transcription and RNase P cleavage. The sequence is that of tRNA(His) guanylyltransferase 1 (THG1) from Arabidopsis thaliana (Mouse-ear cress).